A 396-amino-acid chain; its full sequence is L-lactate dehydrogenase (396 aa).

The FMN hydroxy acid dehydrogenase domain occupies 1-380 (MIISAASDYR…SGDSLVQELG (380 aa)). Tyr-24 serves as a coordination point for substrate. Ser-106 and Gln-127 together coordinate FMN. Substrate is bound at residue Tyr-129. Thr-155 contacts FMN. Substrate is bound at residue Arg-164. Residue Lys-251 coordinates FMN. His-275 serves as the catalytic Proton acceptor. Arg-278 contacts substrate. 306–330 (DSGIRNGLDVVRMIALGADTVLLGR) contacts FMN.

Belongs to the FMN-dependent alpha-hydroxy acid dehydrogenase family. It depends on FMN as a cofactor.

The protein resides in the cell inner membrane. It catalyses the reaction (S)-lactate + A = pyruvate + AH2. In terms of biological role, catalyzes the conversion of L-lactate to pyruvate. Is coupled to the respiratory chain. In Salmonella typhimurium (strain LT2 / SGSC1412 / ATCC 700720), this protein is L-lactate dehydrogenase.